The following is a 200-amino-acid chain: Dual specificity tyrosine-phosphorylation-regulated kinase 1A (200 aa).

Residue Y41 is modified to Phosphotyrosine; by autocatalysis. K58 contacts ATP. Phosphotyrosine; by autocatalysis is present on Y76. S88 is subject to Phosphoserine; by autocatalysis. T122 carries the phosphothreonine; by autocatalysis modification.

The protein belongs to the protein kinase superfamily. CMGC Ser/Thr protein kinase family. MNB/DYRK subfamily. As to quaternary structure, interacts with RAD54L2/ARIP4. Interacts with CRY2. Interacts with RANBP9. Interacts with WDR68. Interacts with SIRT1. Post-translationally, can also autophosphorylate on serine and threonine residues (in vitro). Autophosphorylated on numerous tyrosine residues.

The protein localises to the nucleus. The catalysed reaction is L-tyrosyl-[protein] + ATP = O-phospho-L-tyrosyl-[protein] + ADP + H(+). It carries out the reaction L-seryl-[protein] + ATP = O-phospho-L-seryl-[protein] + ADP + H(+). It catalyses the reaction L-threonyl-[protein] + ATP = O-phospho-L-threonyl-[protein] + ADP + H(+). The enzyme catalyses [DNA-directed RNA polymerase] + ATP = phospho-[DNA-directed RNA polymerase] + ADP + H(+). Its activity is regulated as follows. Inhibited by RANBP9. Its function is as follows. Dual-specificity kinase which possesses both serine/threonine and tyrosine kinase activities. Exhibits a substrate preference for proline at position P+1 and arginine at position P-3. Plays an important role in double-strand breaks (DSBs) repair following DNA damage. Mechanistically, phosphorylates RNF169 and increases its ability to block accumulation of TP53BP1 at the DSB sites thereby promoting homologous recombination repair (HRR). Also acts as a positive regulator of transcription by acting as a CTD kinase that mediates phosphorylation of the CTD (C-terminal domain) of the large subunit of RNA polymerase II (RNAP II) POLR2A. May play a role in a signaling pathway regulating nuclear functions of cell proliferation. Modulates alternative splicing by phosphorylating the splice factor SRSF6. Has pro-survival function and negatively regulates the apoptotic process. Promotes cell survival upon genotoxic stress through phosphorylation of SIRT1. This in turn inhibits p53/TP53 activity and apoptosis. Phosphorylates SEPTIN4, SEPTIN5 and SF3B1 at 'Thr-434'. This is Dual specificity tyrosine-phosphorylation-regulated kinase 1A from Oryctolagus cuniculus (Rabbit).